A 956-amino-acid polypeptide reads, in one-letter code: RNA-silencing factor ers1 (956 aa).

Its subcellular location is the cytoplasm. It localises to the cytoskeleton. The protein localises to the microtubule organizing center. It is found in the spindle pole body. Its function is as follows. Involved in RNAi-dependent heterochromatin formation and centromeric silencing. Required for the conversion of centromeric pre-small interfering RNA transcripts into small interfering RNAs, histone H3 'Lys9' methylation, and the recruitment of the RITS complex to centromeric sequences. In Schizosaccharomyces pombe (strain 972 / ATCC 24843) (Fission yeast), this protein is RNA-silencing factor ers1 (ers1).